The chain runs to 68 residues: Small integral membrane protein 10-like protein 3 (68 aa).

This chain is Small integral membrane protein 10-like protein 3, found in Homo sapiens (Human).